Here is a 284-residue protein sequence, read N- to C-terminus: uncharacterized protein (284 aa).

The first 24 residues, 1–24 (MLYSRESRTTVLFLALVTSLTVLC), serve as a signal peptide directing secretion. Topologically, residues 25-84 (HSVDVTTVFTTSTITEITTVTAAPQPQNKAETALNTATNIIQTMQFLFNCAPFKWKGPLK) are cytoplasmic. A helical membrane pass occupies residues 85–104 (ITSCALNFIVLLLTAWGYLL). The Extracellular portion of the chain corresponds to 105–284 (KYLQENKLNS…SVHMYSSSLL (180 aa)). N-linked (GlcNAc...) asparagine glycosylation is present at Asn270.

It to yeast YNL019c.

The protein resides in the cell membrane. This is an uncharacterized protein from Saccharomyces cerevisiae (strain ATCC 204508 / S288c) (Baker's yeast).